A 429-amino-acid chain; its full sequence is Antho-RFamide neuropeptides type 2 (429 aa).

Positions 1 to 22 (MTTVSYVTILLTVLVQVLTSDA) are cleaved as a signal peptide. The propeptide occupies 23 to 233 (KATNNKRELS…EFQGRFGRED (211 aa)). The segment covering 230 to 371 (GREDQGRFGR…EDIAKEDQGR (142 aa)) has biased composition (basic and acidic residues). Residues 230–429 (GREDQGRFGR…KSDDALAKIS (200 aa)) are disordered. Pyrrolidone carboxylic acid is present on Q234. F237 is subject to Phenylalanine amide. Residues 239–241 (RED) constitute a propeptide that is removed on maturation. A Pyrrolidone carboxylic acid modification is found at Q242. F245 carries the post-translational modification Phenylalanine amide. Positions 247–249 (RED) are excised as a propeptide. Q250 bears the Pyrrolidone carboxylic acid mark. F253 is modified (phenylalanine amide). Residues 255-257 (RED) constitute a propeptide that is removed on maturation. Pyrrolidone carboxylic acid is present on Q258. F261 bears the Phenylalanine amide mark. The propeptide occupies 263–265 (RED). A Pyrrolidone carboxylic acid modification is found at Q266. Residue F269 is modified to Phenylalanine amide. Positions 271-273 (RED) are excised as a propeptide. Residue Q274 is modified to Pyrrolidone carboxylic acid. F277 carries the phenylalanine amide modification. A propeptide spanning residues 279–289 (RELQGRFGRED) is cleaved from the precursor. Q290 bears the Pyrrolidone carboxylic acid mark. Residue F293 is modified to Phenylalanine amide. Positions 295-297 (RED) are excised as a propeptide. Residue Q298 is modified to Pyrrolidone carboxylic acid. A Phenylalanine amide modification is found at F301. The propeptide occupies 303 to 305 (RED). At Q306 the chain carries Pyrrolidone carboxylic acid. F309 bears the Phenylalanine amide mark. Positions 311-321 (RELQGRFGRED) are excised as a propeptide. A Pyrrolidone carboxylic acid modification is found at Q322. The residue at position 325 (F325) is a Phenylalanine amide. Residues 327 to 329 (RED) constitute a propeptide that is removed on maturation. Q330 bears the Pyrrolidone carboxylic acid mark. A Phenylalanine amide modification is found at F333. A propeptide spanning residues 335–342 (REDLAKED) is cleaved from the precursor. The residue at position 343 (Q343) is a Pyrrolidone carboxylic acid. Residue F346 is modified to Phenylalanine amide. The propeptide occupies 348–355 (REDLAKED). A Pyrrolidone carboxylic acid modification is found at Q356. Phenylalanine amide is present on F359. The propeptide occupies 361–368 (REDIAKED). At Q369 the chain carries Pyrrolidone carboxylic acid. Phenylalanine amide is present on F372. The propeptide occupies 374–429 (RNAAAAAKKRTIDVIDIESDPKPQTRFRDGKDMQEKRKVEKKDKIEKSDDALAKIS). The segment covering 392 to 429 (SDPKPQTRFRDGKDMQEKRKVEKKDKIEKSDDALAKIS) has biased composition (basic and acidic residues).

The protein belongs to the FARP (FMRFamide related peptide) family.

The protein resides in the secreted. In terms of biological role, not known but it could act as a transmitter at neuromuscular synapses. In Anthopleura elegantissima (Green aggregating anemone), this protein is Antho-RFamide neuropeptides type 2.